Here is a 243-residue protein sequence, read N- to C-terminus: Peptidyl-tRNA hydrolase (243 aa).

Y14 is a binding site for tRNA. H19 serves as the catalytic Proton acceptor. Residues F64, N66, and N112 each coordinate tRNA. Positions 184–225 (AAQTRPAEKAKPLATAKPKEGEARTSGGSVAEVGAPPPSPTG) are disordered. Residues 189 to 206 (PAEKAKPLATAKPKEGEA) are compositionally biased toward basic and acidic residues.

The protein belongs to the PTH family. As to quaternary structure, monomer.

The protein resides in the cytoplasm. It catalyses the reaction an N-acyl-L-alpha-aminoacyl-tRNA + H2O = an N-acyl-L-amino acid + a tRNA + H(+). In terms of biological role, hydrolyzes ribosome-free peptidyl-tRNAs (with 1 or more amino acids incorporated), which drop off the ribosome during protein synthesis, or as a result of ribosome stalling. Catalyzes the release of premature peptidyl moieties from peptidyl-tRNA molecules trapped in stalled 50S ribosomal subunits, and thus maintains levels of free tRNAs and 50S ribosomes. The chain is Peptidyl-tRNA hydrolase from Rhodospirillum rubrum (strain ATCC 11170 / ATH 1.1.1 / DSM 467 / LMG 4362 / NCIMB 8255 / S1).